Reading from the N-terminus, the 718-residue chain is Tegument protein UL46 (718 aa).

Disordered stretches follow at residues 433–510 and 581–611; these read SAGP…EPPA and TADD…DDES. Residues 444-454 are compositionally biased toward gly residues; it reads GPGGHRAGGGT. Positions 455 to 467 are enriched in basic and acidic residues; that stretch reads CREKIQRARRDNE.

Belongs to the herpesviridae HHV-1 VP11/12 protein family. In terms of assembly, interacts with VP16. Interacts with host LCK, PIK3R1, SHC1 AND GRB2; these interactions promote the activation of the PI3K/AKT pathway. Interacts with host YWHAB. Interacts with ICP0; this interaction targets UL46 for degradation by the proteasome. Interacts (via N-terminus) with host TMEM173. Interacts (via C-terminus) with host TBK1. Interacts with host DOK2. Post-translationally, phosphorylated by host LCK. The phosphorylation seems to be lymphocyte-specific.

The protein resides in the virion tegument. Its subcellular location is the host cytoplasm. It is found in the host cell membrane. Functionally, plays a role in the activation of the host PI3K/AKT pathway to promote cell survival. Interacts with and activates host LCK and thereby recruits downstream partners SHC1, GRB2 and PI3KR1 in order to activate the PI3K pathway by phosphorylating host AKT on its activating residues. This mechanism is inhibited by the viral protein US3 that instead promotes incorporation of UL46 into virions. Plays a role in the inhibition of TMEM173/STING-mediated type I interferon production. Interacts with host DOK2 and induces its degradation. This immune evasion mechanism to inactivate T-cells may play an important role during pathogenesis. This chain is Tegument protein UL46, found in Homo sapiens (Human).